Consider the following 259-residue polypeptide: Src-like-adapter 2 (259 aa).

A compositionally biased stretch (low complexity) spans 1–20; it reads MGSLSSRGKTSSPSPSSSGP. Residues 1 to 30 form a disordered region; that stretch reads MGSLSSRGKTSSPSPSSSGPDQEPVSMQPE. Gly2 is lipidated: N-myristoyl glycine. The region spanning 31–91 is the SH3 domain; sequence RHKVTAVALG…PSVYVAKVAH (61 aa). The SH2 domain maps to 93–190; that stretch reads WLYEGLSREK…GICCPLREPC (98 aa). Residues 190–259 are SLA C-terminal; that stretch reads CVLQKLGPLP…SLAEDPLDDA (70 aa).

Interacts (via its C-terminal domain) with CBL (phosphorylated). Interacts (via SH2 domain) with ZAP70 (phosphorylated) and CD3Z (phosphorylated). Interacts (via SH2 domain) with CSF1R (phosphorylated). Phosphorylated by CSF1R. As to expression, mainly expressed in immune system. Highly expressed in spleen and thymus and expressed at intermediate levels in lung. Not expressed in liver, heart and brain. Isoform 1 is predominant in lung and spleen, while isoform 2 is predominant in thymus.

It is found in the cytoplasm. It localises to the cell membrane. Its subcellular location is the cytoplasmic vesicle. The protein resides in the late endosome. Functionally, adapter protein, which negatively regulates T-cell receptor (TCR) signaling. Inhibits T-cell antigen-receptor induced activation of nuclear factor of activated T-cells. May act by linking signaling proteins such as ZAP70 with CBL, leading to a CBL dependent degradation of signaling proteins. This chain is Src-like-adapter 2 (Sla2), found in Mus musculus (Mouse).